Here is a 282-residue protein sequence, read N- to C-terminus: MTFIDMLGAAERQNHSMLCVGLDPEPARFPGRLAGDASKIYDFCAAIVDATADLVIAFKPQIAYFAAHRAEDQLERLMAHMRRVAPQVPVILDAKRGDIGSTAEQYAIEAFERYGADAVTLSPFMGFDSVAPYLKYHGKGSFLLCRTSNPGGDDLQNQRLASVDGQPLLYEHIARLAQGPWNLNGQLGLVVGATYPAEIERVRAVAPTLPLLIPGVGAQGGDAAATVRAGWRPGAPIIVNSSRAIIYASSGDDFADAARREALRTRDVLQAARADSLRVATP.

Lysine 95 (proton donor) is an active-site residue.

It belongs to the OMP decarboxylase family. Type 2 subfamily.

It carries out the reaction orotidine 5'-phosphate + H(+) = UMP + CO2. The protein operates within pyrimidine metabolism; UMP biosynthesis via de novo pathway; UMP from orotate: step 2/2. The protein is Orotidine 5'-phosphate decarboxylase of Polaromonas naphthalenivorans (strain CJ2).